A 138-amino-acid polypeptide reads, in one-letter code: Thyrotropin subunit beta (138 aa).

An N-terminal signal peptide occupies residues 1–20 (MTAIFLMSMLFGLACGQAMS). Disulfide bonds link cysteine 22–cysteine 72, cysteine 36–cysteine 87, cysteine 39–cysteine 125, cysteine 47–cysteine 103, cysteine 51–cysteine 105, and cysteine 108–cysteine 115. Asparagine 43 carries an N-linked (GlcNAc...) asparagine glycan. The propeptide occupies 133–138 (VLEFSI).

The protein belongs to the glycoprotein hormones subunit beta family. In terms of assembly, heterodimer of a common alpha chain and a unique beta chain which confers biological specificity to thyrotropin, lutropin, follitropin and gonadotropin.

It is found in the secreted. Its function is as follows. Indispensable for the control of thyroid structure and metabolism. This Sus scrofa (Pig) protein is Thyrotropin subunit beta (TSHB).